Consider the following 226-residue polypeptide: Membrane protein (226 aa).

The Virion surface portion of the chain corresponds to 1 to 11 (MSNGSIPVDEV). The helical transmembrane segment at 12-32 (IEHLRNWNFTWNIILTILLVV) threads the bilayer. Residues 33-41 (LQYGHYKYS) lie on the Intravirion side of the membrane. Residues 42 to 62 (VFLYGVKMAILWILWPLVLAL) traverse the membrane as a helical segment. The Virion surface segment spans residues 63-75 (SLFDAWASFQVNW). The chain crosses the membrane as a helical span at residues 76-96 (VFFAFSILMACITLMLWIMYF). The Intravirion portion of the chain corresponds to 97 to 226 (VNSIRLWRRT…TDSEKVPHLV (130 aa)). The interaction with N protein stretch occupies residues 200 to 216 (RSKHGDYSAVSNPSAVL).

The protein belongs to the alphacoronaviruses M protein family. Homomultimer. Interacts with envelope E protein in the budding compartment of the host cell, which is located between endoplasmic reticulum and the Golgi complex. Forms a complex with HE and S proteins. Interacts with nucleocapsid N protein. This interaction probably participates in RNA packaging into the virus.

Its subcellular location is the virion membrane. The protein resides in the host Golgi apparatus membrane. Its function is as follows. Component of the viral envelope that plays a central role in virus morphogenesis and assembly via its interactions with other viral proteins. The polypeptide is Membrane protein (Sus scrofa (Pig)).